The following is a 662-amino-acid chain: DNA ligase (662 aa).

NAD(+) is bound by residues D32–D36, S75–L76, and E106. K108 (N6-AMP-lysine intermediate) is an active-site residue. Positions 129, 164, 271, and 295 each coordinate NAD(+). C389, C392, C407, and C413 together coordinate Zn(2+). The region spanning S580 to K662 is the BRCT domain.

It belongs to the NAD-dependent DNA ligase family. LigA subfamily. Mg(2+) serves as cofactor. It depends on Mn(2+) as a cofactor.

The catalysed reaction is NAD(+) + (deoxyribonucleotide)n-3'-hydroxyl + 5'-phospho-(deoxyribonucleotide)m = (deoxyribonucleotide)n+m + AMP + beta-nicotinamide D-nucleotide.. In terms of biological role, DNA ligase that catalyzes the formation of phosphodiester linkages between 5'-phosphoryl and 3'-hydroxyl groups in double-stranded DNA using NAD as a coenzyme and as the energy source for the reaction. It is essential for DNA replication and repair of damaged DNA. The chain is DNA ligase from Wolbachia pipientis wMel.